The primary structure comprises 228 residues: Large ribosomal subunit protein bL25 (228 aa).

The interval 1-24 is disordered; it reads MATVMELKATARPKSGKGAARAER.

The protein belongs to the bacterial ribosomal protein bL25 family. CTC subfamily. In terms of assembly, part of the 50S ribosomal subunit; part of the 5S rRNA/L5/L18/L25 subcomplex. Contacts the 5S rRNA. Binds to the 5S rRNA independently of L5 and L18.

In terms of biological role, this is one of the proteins that binds to the 5S RNA in the ribosome where it forms part of the central protuberance. This chain is Large ribosomal subunit protein bL25, found in Nitrobacter winogradskyi (strain ATCC 25391 / DSM 10237 / CIP 104748 / NCIMB 11846 / Nb-255).